The sequence spans 143 residues: Histone H2AX (143 aa).

Positions 1-22 (MSGRGKTGGKARAKAKSRSSRA) are disordered. Ser-2 bears the N-acetylserine mark. Position 2 is a phosphoserine (Ser-2). 2 positions are modified to N6-acetyllysine: Lys-6 and Lys-10. Over residues 7 to 19 (TGGKARAKAKSRS) the composition is skewed to basic residues. The residue at position 10 (Lys-10) is an N6-lactoyllysine; alternate. Residues Lys-14 and Lys-16 each participate in a glycyl lysine isopeptide (Lys-Gly) (interchain with G-Cter in ubiquitin) cross-link. Lys-37 carries the N6-acetyllysine modification. Lys-120 is covalently cross-linked (Glycyl lysine isopeptide (Lys-Gly) (interchain with G-Cter in ubiquitin)). The disordered stretch occupies residues 121–143 (TSATVGPKAPSGGKKATQASQEY). Ser-122 carries the post-translational modification Phosphoserine. Glycyl lysine isopeptide (Lys-Gly) (interchain with G-Cter in SUMO2) cross-links involve residues Lys-128 and Lys-135. Ser-140 is subject to Phosphoserine; by ATM, ATR and PRKDC. A [ST]-Q motif motif is present at residues 140-141 (SQ). A Phosphotyrosine; by WSTF modification is found at Tyr-143.

This sequence belongs to the histone H2A family. As to quaternary structure, the nucleosome is a histone octamer containing two molecules each of H2A, H2B, H3 and H4 assembled in one H3-H4 heterotetramer and two H2A-H2B heterodimers. The octamer wraps approximately 147 bp of DNA. Interacts with numerous proteins required for DNA damage signaling and repair when phosphorylated on Ser-140. These include MDC1, TP53BP1, BRCA1 and the MRN complex, composed of MRE11, RAD50, and NBN. Interaction with the MRN complex is mediated at least in part by NBN. Also interacts with DHX9/NDHII when phosphorylated on Ser-140 and MCPH1 when phosphorylated at Ser-140 or Tyr-143. Interacts with ARRB2; the interaction is detected in the nucleus upon OR1D2 stimulation. Interacts with WRAP53/TCAB1. Interacts with HDGFL2. Interacts with DNA damage up-regulated protein DDUP. Forms a complex with DDUP and RAD18 following DDUP phosphorylation. In terms of assembly, (Microbial infection) Interacts with Epstein-Barr virus protein EBNA6. In terms of processing, phosphorylated by VRK1. Phosphorylated on Ser-140 (to form gamma-H2AX or H2AX139ph) in response to DNA double strand breaks (DSBs) generated by exogenous genotoxic agents and by stalled replication forks, and may also occur during meiotic recombination events and immunoglobulin class switching in lymphocytes. Phosphorylation can extend up to several thousand nucleosomes from the actual site of the DSB and may mark the surrounding chromatin for recruitment of proteins required for DNA damage signaling and repair. Widespread phosphorylation may also serve to amplify the damage signal or aid repair of persistent lesions. Phosphorylation of Ser-140 (H2AX139ph) in response to ionizing radiation is mediated by both ATM and PRKDC while defects in DNA replication induce Ser-140 phosphorylation (H2AX139ph) subsequent to activation of ATR and PRKDC. Dephosphorylation of Ser-140 by PP2A is required for DNA DSB repair. In meiosis, Ser-140 phosphorylation (H2AX139ph) may occur at synaptonemal complexes during leptotene as an ATM-dependent response to the formation of programmed DSBs by SPO11. Ser-140 phosphorylation (H2AX139ph) may subsequently occurs at unsynapsed regions of both autosomes and the XY bivalent during zygotene, downstream of ATR and BRCA1 activation. Ser-140 phosphorylation (H2AX139ph) may also be required for transcriptional repression of unsynapsed chromatin and meiotic sex chromosome inactivation (MSCI), whereby the X and Y chromosomes condense in pachytene to form the heterochromatic XY-body. During immunoglobulin class switch recombination in lymphocytes, Ser-140 phosphorylation (H2AX139ph) may occur at sites of DNA-recombination subsequent to activation of the activation-induced cytidine deaminase AICDA. Phosphorylation at Tyr-143 (H2AXY142ph) by BAZ1B/WSTF determines the relative recruitment of either DNA repair or pro-apoptotic factors. Phosphorylation at Tyr-143 (H2AXY142ph) favors the recruitment of APBB1/FE65 and pro-apoptosis factors such as MAPK8/JNK1, triggering apoptosis. In contrast, dephosphorylation of Tyr-143 by EYA proteins (EYA1, EYA2, EYA3 or EYA4) favors the recruitment of MDC1-containing DNA repair complexes to the tail of phosphorylated Ser-140 (H2AX139ph). Post-translationally, monoubiquitination of Lys-120 (H2AXK119ub) by RING1 and RNF2/RING2 complex gives a specific tag for epigenetic transcriptional repression. Following DNA double-strand breaks (DSBs), it is ubiquitinated through 'Lys-63' linkage of ubiquitin moieties by the E2 ligase UBE2N and the E3 ligases RNF8 and RNF168, leading to the recruitment of repair proteins to sites of DNA damage. Ubiquitination at Lys-14 and Lys-16 (H2AK13Ub and H2AK15Ub, respectively) in response to DNA damage is initiated by RNF168 that mediates monoubiquitination at these 2 sites, and 'Lys-63'-linked ubiquitin are then conjugated to monoubiquitin; RNF8 is able to extend 'Lys-63'-linked ubiquitin chains in vitro. H2AK119Ub and ionizing radiation-induced 'Lys-63'-linked ubiquitination (H2AK13Ub and H2AK15Ub) are distinct events. Acetylation at Lys-6 (H2AXK5ac) by KAT5 component of the NuA4 histone acetyltransferase complex promotes NBN/NBS1 assembly at the sites of DNA damage. Acetylation at Lys-37 increases in S and G2 phases. This modification has been proposed to play a role in DNA double-strand break repair.

It is found in the nucleus. It localises to the chromosome. In terms of biological role, variant histone H2A which replaces conventional H2A in a subset of nucleosomes. Nucleosomes wrap and compact DNA into chromatin, limiting DNA accessibility to the cellular machineries which require DNA as a template. Histones thereby play a central role in transcription regulation, DNA repair, DNA replication and chromosomal stability. DNA accessibility is regulated via a complex set of post-translational modifications of histones, also called histone code, and nucleosome remodeling. Required for checkpoint-mediated arrest of cell cycle progression in response to low doses of ionizing radiation and for efficient repair of DNA double strand breaks (DSBs) specifically when modified by C-terminal phosphorylation. The polypeptide is Histone H2AX (Homo sapiens (Human)).